A 1046-amino-acid polypeptide reads, in one-letter code: MTSLSIQPFPEISRMARDLDSRKKRRISLDGIAALCEHSKEIIDSLPMLNSPDYFLKPCINELVEREIESPDYCSRVPDFTIGRIGYGYIRFLGNTDVRRLDLDHIVKFHRHEVIVYDDESSKPVVGEGLNKAAEVTLVVNIPDLTWGKQQVNHIAYKLKQSTERQGATFISFDPDNGLWKFFVPHFSRFGLSDDEAEDIAMDDAPGLGDPVGLDGKKVADIDEEDQMETSELELSHSLPAHLGLDPEKMKEMRMLMFPNEDEDESEDFREQTSHLMTSLTKRNVRPSQKIAQRNSHQDPPPVVRKTPLALLEYNPGNDKSSPGSILMVQQNKNLAVRKSKTGGFELDISHVTPLTDNYSRNVVDAALFMGRSFRAGWGPNGVLFHTGKPICSSSSQMVLSSVINKEKIAIDKVVWDRKGKVQKELIDSAFEAPLSLHKELNHVEEEVRFGSFSLKLQNVVTDRVVLSDICRSYIGIIEKQLEVAGLSTSAKLFLMHQVMVWELIKVLFSERQSTERLMYAASDNEEDVMQDVKEDSAKIDTEALPLIRRAEFSCWLQESVSHRVQEDVSDLNGSSYLEHLFFLLTGRELDSAVELAISKGDVRLACLLSQAGGSTVNRNDILQQLHLWRRNGLDFNFIEKERIKLYELLAGNIHDALQDFTIDWKRFLGLLMWHHLPPDSSLPIIFRSYQLLLNQAKAPWPVPIYIDEGPADGFVSDNKHSDILYYLMLLHSKEEEEFGFLQTMFSAFSSTDDPLDYHMIWHHRGILEAVGAFTSDDLHTLDMGFVAQLLSQGLCHWAIYVVLHIPFREDHPYLHVTVIREILFQYCETWSSMESQRQFIKDLGIPSEWMHEALAVYYNYHGDFVKALDQFIECANWQRAHSIFMTSVAHSLFLSANHSEIWRIATSMDDRKSEIENWDLGAGIYMSFYLLKSSLQEDADTMVELEPLDSTNESCRNFVGRLNESLAVWGDRLPVEARVAYSKMAEEICDLLLSDLSKNPSRETQLTCFETAFDAPLPEDVRSTHLQDAVSLFSLYLSETGQISA.

The 137-residue stretch at 51–187 folds into the Peptidase S59 domain; the sequence is SPDYFLKPCI…GLWKFFVPHF (137 aa). Over residues 283-295 the composition is skewed to polar residues; the sequence is RNVRPSQKIAQRN. The interval 283–304 is disordered; it reads RNVRPSQKIAQRNSHQDPPPVV. Serine 523 is modified (phosphoserine).

As to quaternary structure, part of the nuclear pore complex (NPC). The NPC has an eight-fold symmetrical structure comprising a central transport channel and two rings, the cytoplasmic and nuclear rings, to which eight filaments are attached. The cytoplasmic filaments have loose ends, while the nuclear filaments are joined in a distal ring, forming a nuclear basket. NPCs are highly dynamic in configuration and composition, and can be devided in 3 subcomplexes, the NUP62 subcomplex, the NUP107-160 subcomplex and the NUP93 subcomplex, containing approximately 30 different nucleoporin proteins. In terms of tissue distribution, expressed in roots, leaves, stems, flowers and siliques.

It is found in the nucleus membrane. The protein resides in the nucleus. Its subcellular location is the nuclear pore complex. Functionally, contributes to the transfer of mature mRNA from the nucleus to the cytosol. Required for both R gene-mediated and basal disease resistance. RNA export seems to play a critical role in stress responses and regulation of plant growth and development. This Arabidopsis thaliana (Mouse-ear cress) protein is Nuclear pore complex protein NUP96.